Reading from the N-terminus, the 343-residue chain is GTPase Obg (343 aa).

The region spanning 1-159 is the Obg domain; it reads MKFIDEVKIQ…FELRLELRVL (159 aa). The OBG-type G domain maps to 160-334; that stretch reads ADVGLLGLPN…LIYAIMGHLQ (175 aa). GTP contacts are provided by residues 166–173, 191–195, 213–216, 284–287, and 315–317; these read GLPNAGKS, FTTLY, DIPG, NKVD, and SAL. Residues S173 and T193 each coordinate Mg(2+).

Belongs to the TRAFAC class OBG-HflX-like GTPase superfamily. OBG GTPase family. In terms of assembly, monomer. The cofactor is Mg(2+).

The protein localises to the cytoplasm. Its function is as follows. An essential GTPase which binds GTP, GDP and possibly (p)ppGpp with moderate affinity, with high nucleotide exchange rates and a fairly low GTP hydrolysis rate. Plays a role in control of the cell cycle, stress response, ribosome biogenesis and in those bacteria that undergo differentiation, in morphogenesis control. The protein is GTPase Obg of Nitrosomonas europaea (strain ATCC 19718 / CIP 103999 / KCTC 2705 / NBRC 14298).